A 369-amino-acid chain; its full sequence is Glycolate oxidase (369 aa).

Methionine 1 bears the N-acetylmethionine mark. Positions 1–359 constitute an FMN hydroxy acid dehydrogenase domain; the sequence is MEITNVNEYE…SRSHIAADWD (359 aa). Tyrosine 24 is a binding site for glyoxylate. FMN is bound by residues 77–79, serine 106, 127–129, and threonine 155; these read PTA and QLY. Tyrosine 129 serves as a coordination point for glyoxylate. Position 164 (arginine 164) interacts with glyoxylate. The FMN site is built by lysine 230 and serine 252. Glyoxylate contacts are provided by histidine 254 and arginine 257. Residue histidine 254 is the Proton acceptor of the active site. FMN is bound by residues 285–289 and 308–309; these read DGGVR and GR. A Microbody targeting signal motif is present at residues 367-369; the sequence is ARL.

This sequence belongs to the FMN-dependent alpha-hydroxy acid dehydrogenase family. Homotetramer. The cofactor is FMN.

It is found in the peroxisome. The catalysed reaction is glycolate + O2 = glyoxylate + H2O2. It catalyses the reaction a (2S)-2-hydroxycarboxylate + O2 = a 2-oxocarboxylate + H2O2. Its pathway is photosynthesis; photorespiration; glycine from 2-phosphoglycolate: step 2/3. Catalyzes the oxidation of glycolate to glyoxylate, with a reduction of O2 to H2O2. Is a key enzyme in photorespiration in green plants. To a lesser extent, is also able to use L-lactate and 2-hydroxbyutanoate as substrate in vitro, but shows almost no activity with L-mandelate. This is Glycolate oxidase from Spinacia oleracea (Spinach).